Consider the following 305-residue polypeptide: Mitochondrial thiamine pyrophosphate carrier 1 (305 aa).

A run of 6 helical transmembrane segments spans residues Val-16–Ala-32, Ile-84–Ile-100, Leu-122–Leu-142, Gly-169–Trp-193, Ile-213–Leu-229, and Gly-270–Phe-287. Solcar repeat units lie at residues Val-16–Trp-103, Pro-116–Thr-201, and Asp-206–Ala-295.

The protein belongs to the mitochondrial carrier (TC 2.A.29) family.

Its subcellular location is the mitochondrion inner membrane. Functionally, mitochondrial transporter that mediates uptake of thiamine pyrophosphate (ThPP) into mitochondria. This is Mitochondrial thiamine pyrophosphate carrier 1 (TPC1) from Scheffersomyces stipitis (strain ATCC 58785 / CBS 6054 / NBRC 10063 / NRRL Y-11545) (Yeast).